We begin with the raw amino-acid sequence, 379 residues long: Carbamoyl phosphate synthase small chain (379 aa).

The tract at residues 1–189 is CPSase; that stretch reads MSKSALLVLE…GLPEAKDDSE (189 aa). Residues serine 47, glycine 241, and glycine 243 each coordinate L-glutamine. Residues 193 to 379 form the Glutamine amidotransferase type-1 domain; the sequence is HVVAYDFGAK…FIELIKQHSA (187 aa). Cysteine 269 serves as the catalytic Nucleophile. L-glutamine is bound by residues leucine 270, glutamine 273, asparagine 311, glycine 313, and phenylalanine 314. Catalysis depends on residues histidine 353 and glutamate 355.

The protein belongs to the CarA family. In terms of assembly, composed of two chains; the small (or glutamine) chain promotes the hydrolysis of glutamine to ammonia, which is used by the large (or ammonia) chain to synthesize carbamoyl phosphate. Tetramer of heterodimers (alpha,beta)4.

It carries out the reaction hydrogencarbonate + L-glutamine + 2 ATP + H2O = carbamoyl phosphate + L-glutamate + 2 ADP + phosphate + 2 H(+). It catalyses the reaction L-glutamine + H2O = L-glutamate + NH4(+). It participates in amino-acid biosynthesis; L-arginine biosynthesis; carbamoyl phosphate from bicarbonate: step 1/1. The protein operates within pyrimidine metabolism; UMP biosynthesis via de novo pathway; (S)-dihydroorotate from bicarbonate: step 1/3. Functionally, small subunit of the glutamine-dependent carbamoyl phosphate synthetase (CPSase). CPSase catalyzes the formation of carbamoyl phosphate from the ammonia moiety of glutamine, carbonate, and phosphate donated by ATP, constituting the first step of 2 biosynthetic pathways, one leading to arginine and/or urea and the other to pyrimidine nucleotides. The small subunit (glutamine amidotransferase) binds and cleaves glutamine to supply the large subunit with the substrate ammonia. The polypeptide is Carbamoyl phosphate synthase small chain (Vibrio vulnificus (strain YJ016)).